The sequence spans 423 residues: 26S proteasome regulatory subunit 6A homolog B (423 aa).

A Phosphoserine modification is found at Ser18. 211–218 (GPPGTGKT) is a binding site for ATP. Residues Lys234, Lys278, and Lys415 each participate in a glycyl lysine isopeptide (Lys-Gly) (interchain with G-Cter in ubiquitin) cross-link.

The protein belongs to the AAA ATPase family. In terms of assembly, component of the 19S regulatory particle (RP/PA700) base subcomplex of the 26S proteasome. The 26S proteasome is composed of a core protease (CP), known as the 20S proteasome, capped at one or both ends by the 19S regulatory particle (RP/PA700). The RP/PA700 complex is composed of at least 17 different subunits in two subcomplexes, the base and the lid, which form the portions proximal and distal to the 20S proteolytic core, respectively.

It is found in the cytoplasm. The protein localises to the nucleus. In terms of biological role, the 26S proteasome is involved in the ATP-dependent degradation of ubiquitinated proteins. The regulatory (or ATPase) complex confers ATP dependency and substrate specificity to the 26S complex. This Arabidopsis thaliana (Mouse-ear cress) protein is 26S proteasome regulatory subunit 6A homolog B (RPT5B).